We begin with the raw amino-acid sequence, 258 residues long: Acyl-[acyl-carrier-protein]--UDP-N-acetylglucosamine O-acyltransferase (258 aa).

Belongs to the transferase hexapeptide repeat family. LpxA subfamily. Homotrimer.

It is found in the cytoplasm. It carries out the reaction a (3R)-hydroxyacyl-[ACP] + UDP-N-acetyl-alpha-D-glucosamine = a UDP-3-O-[(3R)-3-hydroxyacyl]-N-acetyl-alpha-D-glucosamine + holo-[ACP]. Its pathway is glycolipid biosynthesis; lipid IV(A) biosynthesis; lipid IV(A) from (3R)-3-hydroxytetradecanoyl-[acyl-carrier-protein] and UDP-N-acetyl-alpha-D-glucosamine: step 1/6. Functionally, involved in the biosynthesis of lipid A, a phosphorylated glycolipid that anchors the lipopolysaccharide to the outer membrane of the cell. This Neisseria meningitidis serogroup B (strain ATCC BAA-335 / MC58) protein is Acyl-[acyl-carrier-protein]--UDP-N-acetylglucosamine O-acyltransferase.